Reading from the N-terminus, the 309-residue chain is MEIKDWYKLTFQIESDSEDIIIWKLNELGIFSFSFEYLIKNQNKKEVNIWLPFDSWDNNSRSDFEKIISKILKINDSKNKFFNWSIIKEEDWLTSWKKFWAPELVGNHFLILPCWINLNEKFKDKQIIKIDPGAAFGTGSHPSTYLCLEKMENILFSDKKVLDIGSGSGILSIAARLGGAKEVCAVDNDYLAINSTNSNFQLNFGNLNNLNTYLGSFNEVILKNQLKQFDFVLCNILAEVIKGMIPNIYKCLRNNGEVIFSGILNSQKDEIIKILIQNNLKLLDVSSRKNWACISAQKPASNPKHKIYL.

4 residues coordinate S-adenosyl-L-methionine: Thr-144, Gly-165, Asp-187, and Asn-235.

Belongs to the methyltransferase superfamily. PrmA family.

The protein localises to the cytoplasm. The catalysed reaction is L-lysyl-[protein] + 3 S-adenosyl-L-methionine = N(6),N(6),N(6)-trimethyl-L-lysyl-[protein] + 3 S-adenosyl-L-homocysteine + 3 H(+). In terms of biological role, methylates ribosomal protein L11. The chain is Ribosomal protein L11 methyltransferase from Prochlorococcus marinus (strain MIT 9215).